The primary structure comprises 92 residues: Small ribosomal subunit protein uS19c (92 aa).

This sequence belongs to the universal ribosomal protein uS19 family.

It localises to the plastid. In terms of biological role, protein S19 forms a complex with S13 that binds strongly to the 16S ribosomal RNA. The sequence is that of Small ribosomal subunit protein uS19c from Cuscuta gronovii (Common dodder).